Consider the following 84-residue polypeptide: Large ribosomal subunit protein bL27 (84 aa).

The disordered stretch occupies residues 1-25 (MAHKKGAGSTKNGRDSKPKMLGVKR).

This sequence belongs to the bacterial ribosomal protein bL27 family.

The chain is Large ribosomal subunit protein bL27 from Dehalococcoides mccartyi (strain ATCC BAA-2266 / KCTC 15142 / 195) (Dehalococcoides ethenogenes (strain 195)).